The chain runs to 243 residues: ATP synthase subunit a, chloroplastic (243 aa).

The next 5 helical transmembrane spans lie at glycine 32 to glycine 52, threonine 96 to isoleucine 116, aspartate 129 to isoleucine 149, leucine 195 to leucine 215, and glycine 216 to glycine 236.

The protein belongs to the ATPase A chain family. In terms of assembly, F-type ATPases have 2 components, CF(1) - the catalytic core - and CF(0) - the membrane proton channel. CF(1) has five subunits: alpha(3), beta(3), gamma(1), delta(1), epsilon(1). CF(0) has four main subunits: a, b, b' and c.

It is found in the plastid. Its subcellular location is the chloroplast thylakoid membrane. Functionally, key component of the proton channel; it plays a direct role in the translocation of protons across the membrane. The polypeptide is ATP synthase subunit a, chloroplastic (Tetradesmus obliquus (Green alga)).